Here is a 718-residue protein sequence, read N- to C-terminus: Amino-acid acetyltransferase, mitochondrial (718 aa).

Residues 1 to 36 constitute a mitochondrion transit peptide; sequence MNPNAVWPRTAQSSLKKHQVSLCTCQRRSHYRLRSF. The tract at residues 97 to 116 is disordered; sequence QHQPDLPQKPTSAPASTAKI. The N-acetyltransferase domain maps to 539–708; that stretch reads RQPRLRLDDP…YEAVCRSIQP (170 aa).

It belongs to the acetyltransferase family.

The protein resides in the mitochondrion. It catalyses the reaction L-glutamate + acetyl-CoA = N-acetyl-L-glutamate + CoA + H(+). It functions in the pathway amino-acid biosynthesis; L-arginine biosynthesis; N(2)-acetyl-L-ornithine from L-glutamate: step 1/4. N-acetylglutamate synthase involved in arginine biosynthesis. The sequence is that of Amino-acid acetyltransferase, mitochondrial (arg2) from Aspergillus clavatus (strain ATCC 1007 / CBS 513.65 / DSM 816 / NCTC 3887 / NRRL 1 / QM 1276 / 107).